The following is a 442-amino-acid chain: Histidinol dehydrogenase (442 aa).

NAD(+)-binding residues include tyrosine 138, glutamine 196, and asparagine 219. The substrate site is built by serine 245, glutamine 267, and histidine 270. Zn(2+) contacts are provided by glutamine 267 and histidine 270. Residues glutamate 334 and histidine 335 each act as proton acceptor in the active site. Positions 335, 368, 422, and 427 each coordinate substrate. Aspartate 368 serves as a coordination point for Zn(2+). Histidine 427 contributes to the Zn(2+) binding site.

The protein belongs to the histidinol dehydrogenase family. Homodimer. Zn(2+) is required as a cofactor.

The enzyme catalyses L-histidinol + 2 NAD(+) + H2O = L-histidine + 2 NADH + 3 H(+). The protein operates within amino-acid biosynthesis; L-histidine biosynthesis; L-histidine from 5-phospho-alpha-D-ribose 1-diphosphate: step 9/9. Catalyzes the sequential NAD-dependent oxidations of L-histidinol to L-histidinaldehyde and then to L-histidine. The chain is Histidinol dehydrogenase from Pectobacterium atrosepticum (strain SCRI 1043 / ATCC BAA-672) (Erwinia carotovora subsp. atroseptica).